We begin with the raw amino-acid sequence, 436 residues long: ATP-dependent RNA helicase RhlB (436 aa).

Positions 9-37 match the Q motif motif; sequence QKFADFPLHKEVHQALNEAGFEFCTPIQA. Positions 40-219 constitute a Helicase ATP-binding domain; sequence LPILLEKKDI…YDHMNEPEKV (180 aa). 53-60 contacts ATP; it reads AQTGTGKT. The short motif at 165–168 is the DEAD box element; it reads DEAD. The region spanning 243 to 390 is the Helicase C-terminal domain; that stretch reads KMPLLLSLLE…VTSYDSDALL (148 aa). The interval 392–436 is disordered; the sequence is DIPPPVRIHRKPSTHTRNTRDRGASRPQGGQRSGPRRHDRTRRHS. Over residues 425–436 the composition is skewed to basic residues; it reads GPRRHDRTRRHS.

Belongs to the DEAD box helicase family. RhlB subfamily. Component of the RNA degradosome, which is a multiprotein complex involved in RNA processing and mRNA degradation.

It localises to the cytoplasm. It catalyses the reaction ATP + H2O = ADP + phosphate + H(+). DEAD-box RNA helicase involved in RNA degradation. Has RNA-dependent ATPase activity and unwinds double-stranded RNA. The protein is ATP-dependent RNA helicase RhlB of Shewanella halifaxensis (strain HAW-EB4).